The primary structure comprises 449 residues: Elongation factor 1-alpha 1 (449 aa).

The tr-type G domain occupies 5–230 (KVHMNLVVVG…DMLEPPVRPS (226 aa)). The segment at 14-21 (GHVDAGKS) is G1. A GTP-binding site is contributed by 14–21 (GHVDAGKS). The tract at residues 70–74 (GITID) is G2. Residues 91-94 (DAPG) form a G3 region. GTP-binding positions include 91-95 (DAPGH) and 153-156 (NKMD). Residues 153 to 156 (NKMD) form a G4 region. A G5 region spans residues 194 to 196 (SGW). Glutamate 362 carries the 5-glutamyl glycerylphosphorylethanolamine modification.

This sequence belongs to the TRAFAC class translation factor GTPase superfamily. Classic translation factor GTPase family. EF-Tu/EF-1A subfamily. In terms of processing, phosphatidylethanolamine (PE) is a direct precursor of the ethanolamine-phosphoglycerol (EPG) moiety.

The protein localises to the cytoplasm. In terms of biological role, this protein promotes the GTP-dependent binding of aminoacyl-tRNA to the A-site of ribosomes during protein biosynthesis. This Trypanosoma brucei brucei (strain 927/4 GUTat10.1) protein is Elongation factor 1-alpha 1 (TEF1).